A 640-amino-acid polypeptide reads, in one-letter code: UvrABC system protein C (640 aa).

The GIY-YIG domain maps to D35–V113. The UVR domain occupies R223–V258.

This sequence belongs to the UvrC family. Interacts with UvrB in an incision complex.

The protein resides in the cytoplasm. The UvrABC repair system catalyzes the recognition and processing of DNA lesions. UvrC both incises the 5' and 3' sides of the lesion. The N-terminal half is responsible for the 3' incision and the C-terminal half is responsible for the 5' incision. This chain is UvrABC system protein C, found in Caulobacter vibrioides (strain ATCC 19089 / CIP 103742 / CB 15) (Caulobacter crescentus).